Reading from the N-terminus, the 513-residue chain is 2,3-bisphosphoglycerate-independent phosphoglycerate mutase (513 aa).

Residues Asp13 and Ser63 each coordinate Mn(2+). The active-site Phosphoserine intermediate is the Ser63. Residues His124, 154–155 (RD), Arg186, Arg192, 262–265 (RADR), and Lys335 each bind substrate. Mn(2+)-binding residues include Asp402, His406, Asp443, His444, and His462.

Belongs to the BPG-independent phosphoglycerate mutase family. Monomer. The cofactor is Mn(2+).

The enzyme catalyses (2R)-2-phosphoglycerate = (2R)-3-phosphoglycerate. The protein operates within carbohydrate degradation; glycolysis; pyruvate from D-glyceraldehyde 3-phosphate: step 3/5. Catalyzes the interconversion of 2-phosphoglycerate and 3-phosphoglycerate. The protein is 2,3-bisphosphoglycerate-independent phosphoglycerate mutase of Shewanella amazonensis (strain ATCC BAA-1098 / SB2B).